A 228-amino-acid polypeptide reads, in one-letter code: Prepilin leader peptidase/N-methyltransferase (228 aa).

A run of 6 helical transmembrane segments spans residues 18–38 (LWGS…NVVI), 95–115 (RYPL…YLMA), 116–136 (PGVP…LAAI), 147–167 (LTLP…YVPL), 168–188 (AEAV…YWVF), and 204–224 (LLAA…LLLA).

The protein belongs to the peptidase A24 family.

It localises to the cell inner membrane. The enzyme catalyses Typically cleaves a -Gly-|-Phe- bond to release an N-terminal, basic peptide of 5-8 residues from type IV prepilin, and then N-methylates the new N-terminal amino group, the methyl donor being S-adenosyl-L-methionine.. Its function is as follows. Plays an essential role in type IV pili and type II pseudopili formation by proteolytically removing the leader sequence from substrate proteins and subsequently monomethylating the alpha-amino group of the newly exposed N-terminal phenylalanine. This chain is Prepilin leader peptidase/N-methyltransferase (pulO), found in Klebsiella pneumoniae.